Reading from the N-terminus, the 251-residue chain is Zinc import ATP-binding protein ZnuC (251 aa).

One can recognise an ABC transporter domain in the interval 5–220; the sequence is VSLENVSVSF…PEFISMFGPR (216 aa). 37 to 44 contacts ATP; the sequence is GPNGAGKS.

This sequence belongs to the ABC transporter superfamily. Zinc importer (TC 3.A.1.15.5) family. In terms of assembly, the complex is composed of two ATP-binding proteins (ZnuC), two transmembrane proteins (ZnuB) and a solute-binding protein (ZnuA).

It localises to the cell inner membrane. The enzyme catalyses Zn(2+)(out) + ATP(in) + H2O(in) = Zn(2+)(in) + ADP(in) + phosphate(in) + H(+)(in). In terms of biological role, part of the ABC transporter complex ZnuABC involved in zinc import. Responsible for energy coupling to the transport system. This chain is Zinc import ATP-binding protein ZnuC, found in Salmonella typhi.